Here is a 689-residue protein sequence, read N- to C-terminus: Elongation factor G (689 aa).

Positions 8-282 constitute a tr-type G domain; that stretch reads DKVRNIGIMA…AIVRYLPSPL (275 aa). Residues 17 to 24, 81 to 85, and 135 to 138 contribute to the GTP site; these read AHIDAGKT, DTPGH, and NKMD.

It belongs to the TRAFAC class translation factor GTPase superfamily. Classic translation factor GTPase family. EF-G/EF-2 subfamily.

The protein localises to the cytoplasm. Functionally, catalyzes the GTP-dependent ribosomal translocation step during translation elongation. During this step, the ribosome changes from the pre-translocational (PRE) to the post-translocational (POST) state as the newly formed A-site-bound peptidyl-tRNA and P-site-bound deacylated tRNA move to the P and E sites, respectively. Catalyzes the coordinated movement of the two tRNA molecules, the mRNA and conformational changes in the ribosome. This is Elongation factor G from Thermoanaerobacter pseudethanolicus (strain ATCC 33223 / 39E) (Clostridium thermohydrosulfuricum).